We begin with the raw amino-acid sequence, 60 residues long: MDHRLLEIIACPVCNGKLWYNQEKQELICKLDNLAFPLRDGIPVLLETEARSITADESKS.

The protein belongs to the UPF0434 family.

In Citrobacter koseri (strain ATCC BAA-895 / CDC 4225-83 / SGSC4696), this protein is UPF0434 protein CKO_02153.